The sequence spans 484 residues: MQEGKNIWSLILAAIRKELSEEEFYIWFENLYFIDATDESIKISAPNSFHKNQVEKRFSKRIKEILTEKGHNTINVEFINPPKEPKTHSMELKNTSLKDISIQQDSPEKRTILNTHTKNIIEHTKHYVIKEDIHTKYRNPFLKKKYTFENFIIGPNNKLAYNASLSIAKNPGKKYNPCLIYGGVGLGKTHLLQSIGNKTEELHKEFKILYVTAENFLNEFVESIKTNETKRFKKKYRHLDMLLIDDIHDLQKKEGIQEELFHTFNALYEDNKQMVFTCDRQPSELINFTDRLKSRFTRGLNVDISKPNFELRVAIIEKKAEEDGIKVPKNILNLVAKKVTTNIRDLEAAVTKLKAHIDLEDIEIDTSIVDKIIKEIIAYENDKTNTNNTINIESIKKVILRELKLTNKDIEGNSKKPEITKARHIYAYLLRNFTELSTIEIGKIIGGKTHSTVLYSINKIDKERNNDLEINNLIIELMNKINKN.

The interval 1–73 (MQEGKNIWSL…EILTEKGHNT (73 aa)) is domain I, interacts with DnaA modulators. Residues 73–140 (TINVEFINPP…EDIHTKYRNP (68 aa)) are domain II. Positions 141–357 (FLKKKYTFEN…AAVTKLKAHI (217 aa)) are domain III, AAA+ region. Glycine 185, glycine 187, lysine 188, and threonine 189 together coordinate ATP. The tract at residues 358-484 (DLEDIEIDTS…IELMNKINKN (127 aa)) is domain IV, binds dsDNA.

Belongs to the DnaA family. As to quaternary structure, oligomerizes as a right-handed, spiral filament on DNA at oriC.

The protein resides in the cytoplasm. Functionally, plays an essential role in the initiation and regulation of chromosomal replication. ATP-DnaA binds to the origin of replication (oriC) to initiate formation of the DNA replication initiation complex once per cell cycle. Binds the DnaA box (a 9 base pair repeat at the origin) and separates the double-stranded (ds)DNA. Forms a right-handed helical filament on oriC DNA; dsDNA binds to the exterior of the filament while single-stranded (ss)DNA is stabiized in the filament's interior. The ATP-DnaA-oriC complex binds and stabilizes one strand of the AT-rich DNA unwinding element (DUE), permitting loading of DNA polymerase. After initiation quickly degrades to an ADP-DnaA complex that is not apt for DNA replication. Binds acidic phospholipids. This chain is Chromosomal replication initiator protein DnaA, found in Borrelia turicatae (strain 91E135).